Reading from the N-terminus, the 268-residue chain is Tryptophan synthase alpha chain (268 aa).

Active-site proton acceptor residues include Glu49 and Asp60.

Belongs to the TrpA family. In terms of assembly, tetramer of two alpha and two beta chains.

It carries out the reaction (1S,2R)-1-C-(indol-3-yl)glycerol 3-phosphate + L-serine = D-glyceraldehyde 3-phosphate + L-tryptophan + H2O. It functions in the pathway amino-acid biosynthesis; L-tryptophan biosynthesis; L-tryptophan from chorismate: step 5/5. In terms of biological role, the alpha subunit is responsible for the aldol cleavage of indoleglycerol phosphate to indole and glyceraldehyde 3-phosphate. The chain is Tryptophan synthase alpha chain from Escherichia coli O81 (strain ED1a).